Reading from the N-terminus, the 810-residue chain is Hemoglobin-haptoglobin utilization protein B (810 aa).

The signal sequence occupies residues 1–22 (MPIPFKPVLAVAAIAQAFPAFA). The region spanning 34–166 (NEITVTGTHK…LGGAVNYQTK (133 aa)) is the TBDR plug domain. The 636-residue stretch at 175-810 (DKPYHLGIKG…SYNFTIEAKF (636 aa)) folds into the TBDR beta-barrel domain. The TonB C-terminal box motif lies at 793 to 810 (QRFTSPGRSYNFTIEAKF).

Belongs to the TonB-dependent receptor family.

It is found in the cell outer membrane. Functionally, acts as a receptor for hemoglobin or the hemoglobin/haptoglobin complex and is required for heme uptake. In Neisseria meningitidis serogroup C, this protein is Hemoglobin-haptoglobin utilization protein B (hpuB).